The primary structure comprises 212 residues: Imidazole glycerol phosphate synthase subunit HisH 2 (212 aa).

Positions 4-211 (HLGLIDYGMG…LDWLQRGAPI (208 aa)) constitute a Glutamine amidotransferase type-1 domain. Cys-82 acts as the Nucleophile in catalysis. Residues His-186 and Glu-188 contribute to the active site.

In terms of assembly, heterodimer of HisH and HisF.

Its subcellular location is the cytoplasm. It catalyses the reaction 5-[(5-phospho-1-deoxy-D-ribulos-1-ylimino)methylamino]-1-(5-phospho-beta-D-ribosyl)imidazole-4-carboxamide + L-glutamine = D-erythro-1-(imidazol-4-yl)glycerol 3-phosphate + 5-amino-1-(5-phospho-beta-D-ribosyl)imidazole-4-carboxamide + L-glutamate + H(+). The catalysed reaction is L-glutamine + H2O = L-glutamate + NH4(+). The protein operates within amino-acid biosynthesis; L-histidine biosynthesis; L-histidine from 5-phospho-alpha-D-ribose 1-diphosphate: step 5/9. Its function is as follows. IGPS catalyzes the conversion of PRFAR and glutamine to IGP, AICAR and glutamate. The HisH subunit provides the glutamine amidotransferase activity that produces the ammonia necessary to HisF for the synthesis of IGP and AICAR. The protein is Imidazole glycerol phosphate synthase subunit HisH 2 (hisH2) of Parasynechococcus marenigrum (strain WH8102).